A 255-amino-acid chain; its full sequence is Imidazole glycerol phosphate synthase subunit HisF (255 aa).

Catalysis depends on residues Asp-11 and Asp-130.

It belongs to the HisA/HisF family. Heterodimer of HisH and HisF.

The protein resides in the cytoplasm. It catalyses the reaction 5-[(5-phospho-1-deoxy-D-ribulos-1-ylimino)methylamino]-1-(5-phospho-beta-D-ribosyl)imidazole-4-carboxamide + L-glutamine = D-erythro-1-(imidazol-4-yl)glycerol 3-phosphate + 5-amino-1-(5-phospho-beta-D-ribosyl)imidazole-4-carboxamide + L-glutamate + H(+). Its pathway is amino-acid biosynthesis; L-histidine biosynthesis; L-histidine from 5-phospho-alpha-D-ribose 1-diphosphate: step 5/9. Its function is as follows. IGPS catalyzes the conversion of PRFAR and glutamine to IGP, AICAR and glutamate. The HisF subunit catalyzes the cyclization activity that produces IGP and AICAR from PRFAR using the ammonia provided by the HisH subunit. This Rhodopseudomonas palustris (strain ATCC BAA-98 / CGA009) protein is Imidazole glycerol phosphate synthase subunit HisF.